The following is a 523-amino-acid chain: Monocarboxylate transporter 7 (523 aa).

The Cytoplasmic portion of the chain corresponds to 1 to 21 (MTQNKLKLCSKANVYTEVPDG). A helical membrane pass occupies residues 22–42 (GWGWAVAVSFFFVEVFTYGII). Over 43 to 62 (KTFGVFFNDLMDSFNESNSR) the chain is Extracellular. Residues 63 to 83 (ISWIISICVFVLTFSAPLATV) form a helical membrane-spanning segment. Residues 84–91 (LSNRFGHR) lie on the Cytoplasmic side of the membrane. The chain crosses the membrane as a helical span at residues 92-112 (LVVMLGGLLVSTGMVAASFSQ). Over 113-118 (EVSHMY) the chain is Extracellular. A helical membrane pass occupies residues 119 to 139 (VAIGIISGLGYCFSFLPTVTI). Residues 140–149 (LSQYFGKRRS) lie on the Cytoplasmic side of the membrane. The chain crosses the membrane as a helical span at residues 150–170 (IVTAVASTGECFAVFAFAPAI). Over 171–184 (MALKERIGWRYSLL) the chain is Extracellular. Residues 185 to 205 (FVGLLQLNIVIFGALLRPIFI) traverse the membrane as a helical segment. Residues 206–299 (RGPASPKIVI…KEKSFICYAL (94 aa)) are Cytoplasmic-facing. Phosphoserine is present on residues Ser-234, Ser-237, Ser-240, and Ser-247. The helical transmembrane segment at 300–320 (FGLFATLGFFAPSLYIIPLGI) threads the bilayer. Residues 321–330 (SLGIDQDRAA) are Extracellular-facing. The helical transmembrane segment at 331-351 (FLLSTMAIAEVFGRIGAGFVL) threads the bilayer. Topologically, residues 352-358 (NREPIRK) are cytoplasmic. The helical transmembrane segment at 359 to 379 (IYIELICVILLTVSLFAFTFA) threads the bilayer. Residues 380–381 (TE) are Extracellular-facing. A helical transmembrane segment spans residues 382–402 (FWGLMSCSIFFGFMVGTIGGT). The Cytoplasmic segment spans residues 403-423 (HIPLLAEDDVVGIEKMSSAAG). The helical transmembrane segment at 424–444 (VYIFIQSIAGLAGPPLAGLLV) threads the bilayer. The Extracellular segment spans residues 445-452 (DQSKIYSR). Residues 453-473 (AFYSCAAGMALAAVCLALVRP) form a helical membrane-spanning segment. Over 474-523 (CKMGLCQHHHSGETKVVSHRGKTLQDIPEDFLEMDLAKNEHRVHVQMEPV) the chain is Cytoplasmic.

It belongs to the major facilitator superfamily. Monocarboxylate porter (TC 2.A.1.13) family. Forms functional complexes with BSG/CD147 or EMB/GP70 ancillary proteins.

Its subcellular location is the basolateral cell membrane. It catalyses the reaction taurine(out) = taurine(in). In terms of biological role, monocarboxylate transporter selective for taurine. May associate with BSG/CD147 or EMB/GP70 ancillary proteins to mediate facilitative efflux or influx of taurine across the plasma membrane. The transport is pH- and sodium-independent. Rather low-affinity, is likely effective for taurine transport in tissues where taurine is present at high concentrations. The protein is Monocarboxylate transporter 7 of Homo sapiens (Human).